Reading from the N-terminus, the 158-residue chain is Protein-export protein SecB (158 aa).

Belongs to the SecB family. Homotetramer, a dimer of dimers. One homotetramer interacts with 1 SecA dimer.

Its subcellular location is the cytoplasm. Its function is as follows. One of the proteins required for the normal export of preproteins out of the cell cytoplasm. It is a molecular chaperone that binds to a subset of precursor proteins, maintaining them in a translocation-competent state. It also specifically binds to its receptor SecA. The chain is Protein-export protein SecB from Bartonella quintana (strain Toulouse) (Rochalimaea quintana).